A 1263-amino-acid polypeptide reads, in one-letter code: Multidrug resistance protein sirA (1263 aa).

The interval 1-21 is disordered; that stretch reads MAEPESEKPSSAQGGGLPSSD. 4 consecutive transmembrane segments (helical) span residues 57 to 77, 104 to 124, 179 to 199, and 206 to 226; these read LISA…ILFI, IALY…IFTN, KIGL…IGFV, and FILT…SGFM. The ABC transmembrane type-1 1 domain maps to 57–347; it reads LISAFFAAVS…VGPHLQAMSL (291 aa). Residue asparagine 232 is glycosylated (N-linked (GlcNAc...) asparagine). 2 consecutive transmembrane segments (helical) span residues 284–304 and 318–338; these read VMGW…GLAI and VGAI…FGNV. Residues 380-625 form the ABC transporter 1 domain; that stretch reads IEFRNVSHVY…EGLYQTFVRR (246 aa). A glycan (N-linked (GlcNAc...) asparagine) is linked at asparagine 384. 415-422 is a binding site for ATP; that stretch reads GASGSGKS. The N-linked (GlcNAc...) asparagine glycan is linked to asparagine 469. The tract at residues 635-672 is disordered; the sequence is PPHARITPAVDTPASPQHRLSEKTGSIYGQGESEAADK. The next 6 membrane-spanning stretches (helical) occupy residues 699 to 719, 740 to 760, 817 to 839, 843 to 865, 930 to 950, and 960 to 980; these read VTGI…SVFF, FWAA…GVQG, VFLG…SLAV, LTLV…LKLV, LSEA…ATLV, and FFIV…VFAF. The ABC transmembrane type-1 2 domain maps to 699 to 986; that stretch reads VTGIASAVIS…VFAFAPDFGK (288 aa). Residues 1021–1259 form the ABC transporter 2 domain; sequence VDVSNVVFYY…RGSYYDSVNL (239 aa). Residue 1056 to 1063 participates in ATP binding; the sequence is GGSGSGKS.

This sequence belongs to the ABC transporter superfamily. ABCB family. Multidrug resistance exporter (TC 3.A.1.201) subfamily.

Its subcellular location is the cell membrane. It carries out the reaction ATP + H2O + xenobioticSide 1 = ADP + phosphate + xenobioticSide 2.. Sirodesmin transporter that provides the dual role of sirodesmin export and self-protection. Also provides tolerance to gliotoxin. This Leptosphaeria maculans (Blackleg fungus) protein is Multidrug resistance protein sirA.